Here is a 341-residue protein sequence, read N- to C-terminus: Glycerol-3-phosphate dehydrogenase [NAD(P)+] (341 aa).

The NADPH site is built by S14, F15, R35, and K108. Sn-glycerol 3-phosphate contacts are provided by K108 and G136. A140 lines the NADPH pocket. Sn-glycerol 3-phosphate-binding residues include K191, D244, S254, R255, and N256. K191 acts as the Proton acceptor in catalysis. R255 provides a ligand contact to NADPH. Residues V279 and E281 each coordinate NADPH.

Belongs to the NAD-dependent glycerol-3-phosphate dehydrogenase family.

The protein resides in the cytoplasm. The enzyme catalyses sn-glycerol 3-phosphate + NAD(+) = dihydroxyacetone phosphate + NADH + H(+). It carries out the reaction sn-glycerol 3-phosphate + NADP(+) = dihydroxyacetone phosphate + NADPH + H(+). It participates in membrane lipid metabolism; glycerophospholipid metabolism. Its function is as follows. Catalyzes the reduction of the glycolytic intermediate dihydroxyacetone phosphate (DHAP) to sn-glycerol 3-phosphate (G3P), the key precursor for phospholipid synthesis. This Pseudomonas fluorescens (strain ATCC BAA-477 / NRRL B-23932 / Pf-5) protein is Glycerol-3-phosphate dehydrogenase [NAD(P)+].